The following is a 393-amino-acid chain: Methylthioribose kinase (393 aa).

ATP is bound by residues Asn38, Lys53, and Glu107–Leu109. Asp225 is a binding site for substrate. Residue Asp242–Glu244 coordinates ATP. Position 332 (Arg332) interacts with substrate.

The protein belongs to the methylthioribose kinase family. Homodimer.

The enzyme catalyses 5-(methylsulfanyl)-D-ribose + ATP = 5-(methylsulfanyl)-alpha-D-ribose 1-phosphate + ADP + H(+). It participates in amino-acid biosynthesis; L-methionine biosynthesis via salvage pathway; S-methyl-5-thio-alpha-D-ribose 1-phosphate from S-methyl-5'-thioadenosine (hydrolase route): step 2/2. Catalyzes the phosphorylation of methylthioribose into methylthioribose-1-phosphate. This chain is Methylthioribose kinase, found in Bacillus thuringiensis subsp. konkukian (strain 97-27).